The primary structure comprises 616 residues: UvrABC system protein C (616 aa).

The 75-residue stretch at 11-85 folds into the GIY-YIG domain; it reads ASPGVYIFRR…IKQHRPHYNV (75 aa). Residues 194–229 enclose the UVR domain; it reads APVIARLKADMQAAARAQDFEQAARLRDRVQAVEKL.

It belongs to the UvrC family. In terms of assembly, interacts with UvrB in an incision complex.

Its subcellular location is the cytoplasm. Functionally, the UvrABC repair system catalyzes the recognition and processing of DNA lesions. UvrC both incises the 5' and 3' sides of the lesion. The N-terminal half is responsible for the 3' incision and the C-terminal half is responsible for the 5' incision. The chain is UvrABC system protein C from Deinococcus geothermalis (strain DSM 11300 / CIP 105573 / AG-3a).